Reading from the N-terminus, the 282-residue chain is uncharacterized protein (282 aa).

The active-site Proton donor is Y50. H115 is a binding site for substrate.

The protein belongs to the aldo/keto reductase family.

This is an uncharacterized protein from Saccharomyces cerevisiae (strain ATCC 204508 / S288c) (Baker's yeast).